A 660-amino-acid polypeptide reads, in one-letter code: Translation factor GUF1 homolog, mitochondrial (660 aa).

Residues 62–243 (EKIRNFSIIA…TIIEKIPPPT (182 aa)) form the tr-type G domain. Residues 71-78 (AHIDHGKS), 136-140 (DTPGH), and 190-193 (NKID) contribute to the GTP site.

It belongs to the TRAFAC class translation factor GTPase superfamily. Classic translation factor GTPase family. LepA subfamily.

Its subcellular location is the mitochondrion inner membrane. It catalyses the reaction GTP + H2O = GDP + phosphate + H(+). In terms of biological role, promotes mitochondrial protein synthesis. May act as a fidelity factor of the translation reaction, by catalyzing a one-codon backward translocation of tRNAs on improperly translocated ribosomes. Binds to mitochondrial ribosomes in a GTP-dependent manner. This chain is Translation factor GUF1 homolog, mitochondrial, found in Trichoplax adhaerens (Trichoplax reptans).